The following is a 529-amino-acid chain: GTPase Obg (529 aa).

The region spanning 2–159 is the Obg domain; the sequence is PTFVDRVVLH…LDAVLELKTV (158 aa). The disordered stretch occupies residues 62 to 86; the sequence is FHPHQRASRGRPGQGSNRHGADGAD. One can recognise an OBG-type G domain in the interval 160–332; the sequence is ADVALVGFPS…LSLALADLVA (173 aa). Residues 166-173, 191-195, 213-216, 284-287, and 313-315 contribute to the GTP site; these read GFPSAGKS, FTTLV, DVPG, NKID, and STA. Positions 173 and 193 each coordinate Mg(2+). The region spanning 350–427 is the OCT domain; it reads PRAVNEPDFT…IGEVTFDWEP (78 aa). Disordered regions lie at residues 434 to 494 and 506 to 529; these read LGNG…DRLR and ARRA…EEEG. Composition is skewed to low complexity over residues 461–472 and 508–520; these read AGTAASGAAPSP and RAAA…VRGE.

The protein belongs to the TRAFAC class OBG-HflX-like GTPase superfamily. OBG GTPase family. As to quaternary structure, monomer. Mg(2+) is required as a cofactor.

It is found in the cytoplasm. An essential GTPase which binds GTP, GDP and possibly (p)ppGpp with moderate affinity, with high nucleotide exchange rates and a fairly low GTP hydrolysis rate. Plays a role in control of the cell cycle, stress response, ribosome biogenesis and in those bacteria that undergo differentiation, in morphogenesis control. This chain is GTPase Obg, found in Frankia casuarinae (strain DSM 45818 / CECT 9043 / HFP020203 / CcI3).